A 141-amino-acid chain; its full sequence is Protein X (141 aa).

The tract at residues 24 to 52 (QSSGPPFPRPAAGSAASSTSSPSPSDESD) is disordered. Low complexity predominate over residues 33 to 48 (PAAGSAASSTSSPSPS). A mitochondrial targeting sequence region spans residues 68–113 (PCCLVFTCADLRTMDSTVNFVSWHAKRQLGMPSKDLWTPYIKDQLL).

This sequence belongs to the orthohepadnavirus protein X family. In terms of assembly, may form homodimer. May interact with host CEBPA, CFLAR, CREB1, DDB1, E4F1, HBXIP, HSPD1/HSP60, NFKBIA, POLR2E and SMAD4. Interacts with host SMC5-SMC6 complex and induces its degradation. Interacts with host TRPC4AP; leading to prevent ubiquitination of TRPC4AP. Interacts with host PLSCR1; this interaction promotes ubiquitination and degradation of HBx and impairs HBx-mediated cell proliferation. A fraction may be phosphorylated in insect cells and HepG2 cells, a human hepatoblastoma cell line. Phosphorylated in vitro by host protein kinase C or mitogen-activated protein kinase. N-acetylated in insect cells.

The protein resides in the host cytoplasm. The protein localises to the host nucleus. It is found in the host mitochondrion. Functionally, multifunctional protein that plays a role in silencing host antiviral defenses and promoting viral transcription. Does not seem to be essential for HBV infection. May be directly involved in development of cirrhosis and liver cancer (hepatocellular carcinoma). Most of cytosolic activities involve modulation of cytosolic calcium. The effect on apoptosis is controversial depending on the cell types in which the studies have been conducted. May induce apoptosis by localizing in mitochondria and causing loss of mitochondrial membrane potential. May also modulate apoptosis by binding host CFLAR, a key regulator of the death-inducing signaling complex (DISC). Promotes viral transcription by using the host E3 ubiquitin ligase DDB1 to target the SMC5-SMC6 complex to proteasomal degradation. This host complex would otherwise bind to viral episomal DNA, and prevents its transcription. Moderately stimulates transcription of many different viral and cellular transcription elements. Promoters and enhancers stimulated by HBx contain DNA binding sites for NF-kappa-B, AP-1, AP-2, c-EBP, ATF/CREB, or the calcium-activated factor NF-AT. The polypeptide is Protein X (Marmota monax (Woodchuck)).